Reading from the N-terminus, the 455-residue chain is Golgi pH regulator (455 aa).

5 helical membrane-spanning segments follow: residues 5 to 25 (IDSS…WLFF), 46 to 66 (VTFA…LGVL), 79 to 99 (LCVI…YFIV), 114 to 134 (CLLW…FPIL), and 150 to 170 (VGVI…VNCP). Residues Asn180 and Asn243 are each glycosylated (N-linked (GlcNAc...) asparagine). 4 helical membrane-spanning segments follow: residues 290-310 (GYFF…NIVL), 343-363 (ISFI…LITL), 378-398 (VIVL…VLLI), and 425-445 (WFDV…YLAH).

The protein belongs to the Golgi pH regulator (TC 1.A.38) family. In terms of assembly, homotrimer. Interacts with RABL3; the interaction stabilizes GPR89B.

The protein localises to the golgi apparatus membrane. It catalyses the reaction iodide(out) = iodide(in). The catalysed reaction is chloride(in) = chloride(out). The enzyme catalyses bromide(in) = bromide(out). It carries out the reaction fluoride(in) = fluoride(out). Functionally, voltage-gated channel that enables the transfer of anions such as iodide, chloride, bromide and fluoride which may function in counter-ion conductance and participates in Golgi acidification. Plays a role in lymphocyte development, probably by acting as a RABL3 effector in hematopoietic cells. This chain is Golgi pH regulator, found in Cricetulus griseus (Chinese hamster).